Reading from the N-terminus, the 428-residue chain is Serine--tRNA ligase (428 aa).

L-serine is bound at residue 231–233; the sequence is TSE. Residues 262–264 and valine 278 each bind ATP; that span reads RRE. Glutamate 285 is a binding site for L-serine. 349 to 352 lines the ATP pocket; that stretch reads ELTS. Threonine 384 serves as a coordination point for L-serine.

The protein belongs to the class-II aminoacyl-tRNA synthetase family. Type-1 seryl-tRNA synthetase subfamily. As to quaternary structure, homodimer. The tRNA molecule binds across the dimer.

It is found in the cytoplasm. It catalyses the reaction tRNA(Ser) + L-serine + ATP = L-seryl-tRNA(Ser) + AMP + diphosphate + H(+). The enzyme catalyses tRNA(Sec) + L-serine + ATP = L-seryl-tRNA(Sec) + AMP + diphosphate + H(+). It participates in aminoacyl-tRNA biosynthesis; selenocysteinyl-tRNA(Sec) biosynthesis; L-seryl-tRNA(Sec) from L-serine and tRNA(Sec): step 1/1. In terms of biological role, catalyzes the attachment of serine to tRNA(Ser). Is also able to aminoacylate tRNA(Sec) with serine, to form the misacylated tRNA L-seryl-tRNA(Sec), which will be further converted into selenocysteinyl-tRNA(Sec). The sequence is that of Serine--tRNA ligase from Bifidobacterium longum subsp. infantis (strain ATCC 15697 / DSM 20088 / JCM 1222 / NCTC 11817 / S12).